A 485-amino-acid polypeptide reads, in one-letter code: NADH-quinone oxidoreductase subunit N (485 aa).

14 helical membrane-spanning segments follow: residues 8–28, 35–55, 71–91, 105–125, 127–147, 159–179, 203–223, 235–255, 271–291, 297–317, 326–346, 373–393, 408–430, and 455–475; these read LIAL…MLSI, FLNA…LWFV, GFAM…CTFA, FYLL…ANHL, SLFL…GYAF, YTIL…LVYA, LLAG…LVPF, PAPV…GVVM, VVLA…ALSQ, LLGY…IALQ, VGVY…VVSL, AAVM…LGFI, WWLV…RVAV, and IVVL…QPLI.

This sequence belongs to the complex I subunit 2 family. As to quaternary structure, NDH-1 is composed of 13 different subunits. Subunits NuoA, H, J, K, L, M, N constitute the membrane sector of the complex.

It localises to the cell inner membrane. The enzyme catalyses a quinone + NADH + 5 H(+)(in) = a quinol + NAD(+) + 4 H(+)(out). NDH-1 shuttles electrons from NADH, via FMN and iron-sulfur (Fe-S) centers, to quinones in the respiratory chain. The immediate electron acceptor for the enzyme in this species is believed to be ubiquinone. Couples the redox reaction to proton translocation (for every two electrons transferred, four hydrogen ions are translocated across the cytoplasmic membrane), and thus conserves the redox energy in a proton gradient. This chain is NADH-quinone oxidoreductase subunit N, found in Escherichia coli O1:K1 / APEC.